A 553-amino-acid chain; its full sequence is Glutamate--tRNA ligase (553 aa).

Residues 41-51 (PSPTGFQHIGG) carry the 'HIGH' region motif. A 'KMSKS' region motif is present at residues 293-297 (KLSKR). Lys296 serves as a coordination point for ATP.

It belongs to the class-I aminoacyl-tRNA synthetase family. Glutamate--tRNA ligase type 1 subfamily. Monomer.

It is found in the cytoplasm. It carries out the reaction tRNA(Glu) + L-glutamate + ATP = L-glutamyl-tRNA(Glu) + AMP + diphosphate. Catalyzes the attachment of glutamate to tRNA(Glu) in a two-step reaction: glutamate is first activated by ATP to form Glu-AMP and then transferred to the acceptor end of tRNA(Glu). The polypeptide is Glutamate--tRNA ligase (Clostridium beijerinckii (strain ATCC 51743 / NCIMB 8052) (Clostridium acetobutylicum)).